Reading from the N-terminus, the 601-residue chain is Probable cytochrome P450 525A1 (601 aa).

Residues 12-32 (ISYFLTCSIFGFILWILTEQI) form a helical membrane-spanning segment. The segment at 205-253 (NNNNNNNNNNNNNNNNNNNNNNNNNNNNNNNNNNNNNNNNNNNNNNNNN) is disordered. Position 544 (Cys-544) interacts with heme.

This sequence belongs to the cytochrome P450 family. Heme is required as a cofactor.

The protein localises to the membrane. This chain is Probable cytochrome P450 525A1 (cyp525A1), found in Dictyostelium discoideum (Social amoeba).